Reading from the N-terminus, the 107-residue chain is Large ribosomal subunit protein eL21 (107 aa).

It belongs to the eukaryotic ribosomal protein eL21 family.

This is Large ribosomal subunit protein eL21 (rpl21e) from Aeropyrum pernix (strain ATCC 700893 / DSM 11879 / JCM 9820 / NBRC 100138 / K1).